Here is a 335-residue protein sequence, read N- to C-terminus: Holliday junction branch migration complex subunit RuvB (335 aa).

The interval 4–184 (ADRLIQPTAL…FGIVQRLEFY (181 aa)) is large ATPase domain (RuvB-L). ATP is bound by residues isoleucine 23, arginine 24, glycine 65, lysine 68, threonine 69, threonine 70, 131-133 (EDY), arginine 174, tyrosine 184, and arginine 221. Threonine 69 provides a ligand contact to Mg(2+). The segment at 185–255 (NIKDLTQIVK…VASAALDMLD (71 aa)) is small ATPAse domain (RuvB-S). The head domain (RuvB-H) stretch occupies residues 258–335 (KEGFDYMDRK…LHFGYDYEPN (78 aa)). Positions 294, 313, and 318 each coordinate DNA.

The protein belongs to the RuvB family. As to quaternary structure, homohexamer. Forms an RuvA(8)-RuvB(12)-Holliday junction (HJ) complex. HJ DNA is sandwiched between 2 RuvA tetramers; dsDNA enters through RuvA and exits via RuvB. An RuvB hexamer assembles on each DNA strand where it exits the tetramer. Each RuvB hexamer is contacted by two RuvA subunits (via domain III) on 2 adjacent RuvB subunits; this complex drives branch migration. In the full resolvosome a probable DNA-RuvA(4)-RuvB(12)-RuvC(2) complex forms which resolves the HJ.

It is found in the cytoplasm. It carries out the reaction ATP + H2O = ADP + phosphate + H(+). Its function is as follows. The RuvA-RuvB-RuvC complex processes Holliday junction (HJ) DNA during genetic recombination and DNA repair, while the RuvA-RuvB complex plays an important role in the rescue of blocked DNA replication forks via replication fork reversal (RFR). RuvA specifically binds to HJ cruciform DNA, conferring on it an open structure. The RuvB hexamer acts as an ATP-dependent pump, pulling dsDNA into and through the RuvAB complex. RuvB forms 2 homohexamers on either side of HJ DNA bound by 1 or 2 RuvA tetramers; 4 subunits per hexamer contact DNA at a time. Coordinated motions by a converter formed by DNA-disengaged RuvB subunits stimulates ATP hydrolysis and nucleotide exchange. Immobilization of the converter enables RuvB to convert the ATP-contained energy into a lever motion, pulling 2 nucleotides of DNA out of the RuvA tetramer per ATP hydrolyzed, thus driving DNA branch migration. The RuvB motors rotate together with the DNA substrate, which together with the progressing nucleotide cycle form the mechanistic basis for DNA recombination by continuous HJ branch migration. Branch migration allows RuvC to scan DNA until it finds its consensus sequence, where it cleaves and resolves cruciform DNA. The chain is Holliday junction branch migration complex subunit RuvB from Pseudoalteromonas atlantica (strain T6c / ATCC BAA-1087).